Here is a 543-residue protein sequence, read N- to C-terminus: Gap junction alpha-10 protein (543 aa).

Over 1 to 16 (MGDWNLLGGILEEVHS) the chain is Cytoplasmic. A helical transmembrane segment spans residues 17–37 (HSTIVGKIWLTILFIFRMLVL). The Extracellular portion of the chain corresponds to 38–76 (RVAAEDVWDDEQSAFACNTRQPGCNNICYDDAFPISLIR). The chain crosses the membrane as a helical span at residues 77–97 (FWVLQIIFVSSPSLVYMGHAL). Residues 98 to 165 (YRLRAFEKDR…TYVLHILTRS (68 aa)) are Cytoplasmic-facing. A helical transmembrane segment spans residues 166-186 (VLEVGFMIGQYILYGFQMHPL). The Extracellular segment spans residues 187–209 (YKCTQPPCPNAVDCFVSRPTEKT). The helical transmembrane segment at 210-230 (IFMLFMHSIAAISLLLNILEI) threads the bilayer. The Cytoplasmic portion of the chain corresponds to 231–543 (FHLGIRKIMR…HSIHSVKFNS (313 aa)). Disordered stretches follow at residues 306–359 (PQPR…SSFG) and 379–424 (PSFA…DRSR). Basic and acidic residues predominate over residues 317 to 328 (NGKKDWSEKDQH). The span at 344–359 (AGNQHLGQQSDHSSFG) shows a compositional bias: polar residues. A compositionally biased stretch (basic and acidic residues) spans 400 to 413 (TDLHSHCRDSEGSM).

The protein belongs to the connexin family. Alpha-type (group II) subfamily. As to quaternary structure, a connexon is composed of a hexamer of connexins. In terms of tissue distribution, expressed in skeletal muscle and heart.

Its subcellular location is the cell membrane. The protein localises to the cell junction. The protein resides in the gap junction. In terms of biological role, one gap junction consists of a cluster of closely packed pairs of transmembrane channels, the connexons, through which materials of low MW diffuse from one cell to a neighboring cell. Involved in tracer coupling between horizontal cells of the retina. May play a role in the regulation of horizontal cell patterning. The sequence is that of Gap junction alpha-10 protein (GJA10) from Homo sapiens (Human).